The chain runs to 334 residues: Protein-methionine-sulfoxide reductase catalytic subunit MsrP (334 aa).

The segment at residues 1-44 (MKKNQFLKESDVTAESVFFMKRRQVLKALGISAAALSLPHAAHA) is a signal peptide (tat-type signal). Mo-molybdopterin contacts are provided by residues Asn88, 91–92 (YE), Cys146, Thr181, Asn233, Arg238, and 249–251 (GIK).

This sequence belongs to the MsrP family. In terms of assembly, heterodimer of a catalytic subunit (MsrP) and a heme-binding subunit (MsrQ). It depends on Mo-molybdopterin as a cofactor. Predicted to be exported by the Tat system. The position of the signal peptide cleavage has not been experimentally proven.

Its subcellular location is the periplasm. The enzyme catalyses L-methionyl-[protein] + a quinone + H2O = L-methionyl-(S)-S-oxide-[protein] + a quinol. It catalyses the reaction L-methionyl-[protein] + a quinone + H2O = L-methionyl-(R)-S-oxide-[protein] + a quinol. In terms of biological role, part of the MsrPQ system that repairs oxidized periplasmic proteins containing methionine sulfoxide residues (Met-O), using respiratory chain electrons. Thus protects these proteins from oxidative-stress damage caused by reactive species of oxygen and chlorine generated by the host defense mechanisms. MsrPQ is essential for the maintenance of envelope integrity under bleach stress, rescuing a wide series of structurally unrelated periplasmic proteins from methionine oxidation, including the primary periplasmic chaperone SurA and the lipoprotein Pal. The catalytic subunit MsrP is non-stereospecific, being able to reduce both (R-) and (S-) diastereoisomers of methionine sulfoxide. The sequence is that of Protein-methionine-sulfoxide reductase catalytic subunit MsrP from Escherichia coli O157:H7.